The following is a 469-amino-acid chain: Alpha-galactosidase (469 aa).

Residues 1–17 form the signal peptide; it reads MFPFFFALFFSSTDVLA. The cysteines at positions 41 and 73 are disulfide-linked. Substrate contacts are provided by Asp71 and Asp72. N-linked (GlcNAc...) asparagine glycosylation is present at Asn81. Cys120 and Cys150 form a disulfide bridge. Lys146 is a binding site for substrate. The active-site Nucleophile is the Asp148. Residue Asn174 is glycosylated (N-linked (GlcNAc...) asparagine). Arg204 is a substrate binding site. The active-site Proton donor is Asp208. Intrachain disulfides connect Cys220–Cys236 and Cys222–Cys229. A substrate-binding site is contributed by Gln250. Asn269, Asn369, Asn402, Asn412, Asn421, Asn426, and Asn434 each carry an N-linked (GlcNAc...) asparagine glycan.

Belongs to the glycosyl hydrolase 27 family. As to quaternary structure, homotetramer.

Its subcellular location is the secreted. The enzyme catalyses Hydrolysis of terminal, non-reducing alpha-D-galactose residues in alpha-D-galactosides, including galactose oligosaccharides, galactomannans and galactolipids.. This is Alpha-galactosidase (MEL) from Lachancea cidri (Yeast).